A 205-amino-acid polypeptide reads, in one-letter code: N-(5'-phosphoribosyl)anthranilate isomerase (205 aa).

Belongs to the TrpF family.

The catalysed reaction is N-(5-phospho-beta-D-ribosyl)anthranilate = 1-(2-carboxyphenylamino)-1-deoxy-D-ribulose 5-phosphate. It participates in amino-acid biosynthesis; L-tryptophan biosynthesis; L-tryptophan from chorismate: step 3/5. The chain is N-(5'-phosphoribosyl)anthranilate isomerase from Thiobacillus denitrificans (strain ATCC 25259 / T1).